A 2100-amino-acid chain; its full sequence is Autophagy-related protein 2 (2100 aa).

7 disordered regions span residues 101 to 129 (LPDK…HSVL), 288 to 363 (STVH…DSDD), 410 to 492 (IFPK…AVSQ), 512 to 588 (MSAM…HNSP), 674 to 694 (LPIS…GLND), 1474 to 1499 (PSHG…SASA), and 1969 to 1996 (DFLN…VDEG). Over residues 300 to 320 (RPRSPQPSSSGSDSCGDMSRS) the composition is skewed to low complexity. Residues 335–346 (VDSHGDESRHLE) are compositionally biased toward basic and acidic residues. The span at 462–485 (DSATSARGKTPDCQTEQESPSTSK) shows a compositional bias: polar residues. Positions 512–522 (MSAMSQSSTTS) are enriched in low complexity. Basic and acidic residues-rich tracts occupy residues 535–546 (KRIDTSDPDQKE) and 555–565 (TEAKGASHDFD). Residues 1973–1985 (SPRGSPSRPSTSD) show a composition bias toward low complexity. The span at 1986–1996 (GRWDDNGVDEG) shows a compositional bias: basic and acidic residues.

This sequence belongs to the ATG2 family.

The protein localises to the preautophagosomal structure membrane. The protein resides in the endoplasmic reticulum membrane. The catalysed reaction is a 1,2-diacyl-sn-glycero-3-phosphocholine(in) = a 1,2-diacyl-sn-glycero-3-phosphocholine(out). It carries out the reaction a 1,2-diacyl-sn-glycero-3-phospho-L-serine(in) = a 1,2-diacyl-sn-glycero-3-phospho-L-serine(out). The enzyme catalyses a 1,2-diacyl-sn-glycero-3-phosphoethanolamine(in) = a 1,2-diacyl-sn-glycero-3-phosphoethanolamine(out). Lipid transfer protein required for autophagosome completion and peroxisome degradation. Tethers the edge of the isolation membrane (IM) to the endoplasmic reticulum (ER) and mediates direct lipid transfer from ER to IM for IM expansion. ATG2 binds to the ER exit site (ERES), which is the membrane source for autophagosome formation, using basic residues in its N-terminal region (NR) and to the expanding edge of the IM through its C-terminal region. The latter binding is assisted by an ATG18-PtdIns3P interaction. ATG2 then extracts phospholipids from the membrane source using its NR and transfers them to ATG9 to the IM through its predicted beta-sheet-rich structure for membrane expansion. This is Autophagy-related protein 2 (ATG2) from Coccidioides immitis (strain RS) (Valley fever fungus).